A 581-amino-acid chain; its full sequence is MAKQLSFSNESREALEKGVNFVANAVKVTIGPKAKNVVIDRKFGSPDIVSDGSTVAKEIEIENPISNLGAKLIEQVASKTKESAGDGTTTATILTQKMVQEGLKNIASGASPIELKKGMEVGLDFVLEKLSSKSISLSGSDIQKVATVSAGGDEEIGSIISKAMDIVTSDGVINVEESQSLDTELDITEGMSFDRGYSSPYFVTDQERQICELENPKILITDQKISTLVDLVPILEEIQKSGSPFLILAEDIEGEALTTLVLNKNSGVLNVASVRAPLFGERRKAALEDIAILTGAKLISEDKSMTLDKVSINDLGKAKKITITKDKTTIIAFEDTKDLVKARVEKLKREVDMTDSEYDQDKINERIAKLAGGVALIKVGAATETEMKYKKLRIEDSLNATKAAIEEGVVPGGGQTLIEISDDLLNLSQTSSDDLRTGINIIKEALLEPTKQIAKNAGFNGDVVIAEIKRLNKGFNANSGKYEDLKNSGILDPTKVIRLALQDSVSIAAMLLTTEVAIADIPEPEPAAPGGPSGDPMGGMGGMGMPGMGGMGMPGMGGMGMPGMGGMGMPGMGGMGMPGMM.

Residues 29-32 (TIGP), 86-90 (DGTTT), G413, and D492 each bind ATP. Residues 522-543 (PEPEPAAPGGPSGDPMGGMGGM) form a disordered region. Residues 531–543 (GPSGDPMGGMGGM) show a composition bias toward gly residues.

Belongs to the chaperonin (HSP60) family. As to quaternary structure, forms a cylinder of 14 subunits composed of two heptameric rings stacked back-to-back. Interacts with the co-chaperonin GroES.

The protein resides in the cytoplasm. It catalyses the reaction ATP + H2O + a folded polypeptide = ADP + phosphate + an unfolded polypeptide.. Functionally, together with its co-chaperonin GroES, plays an essential role in assisting protein folding. The GroEL-GroES system forms a nano-cage that allows encapsulation of the non-native substrate proteins and provides a physical environment optimized to promote and accelerate protein folding. This Prochlorococcus marinus (strain MIT 9215) protein is Chaperonin GroEL 1.